The primary structure comprises 87 residues: U3-theraphotoxin-Hhn1p (87 aa).

The N-terminal stretch at 1–24 (MVNMKASMFLTFAGLVLLFVVCYA) is a signal peptide. Positions 25–52 (SESEEKEFPKEMLSSIFAVDNDFKQEER) are excised as a propeptide. 3 cysteine pairs are disulfide-bonded: Cys-54–Cys-67, Cys-61–Cys-72, and Cys-66–Cys-79.

The protein belongs to the neurotoxin 10 (Hwtx-1) family. 51 (Hntx-8) subfamily. Hntx-8 sub-subfamily. Expressed by the venom gland.

It is found in the secreted. Ion channel inhibitor. The sequence is that of U3-theraphotoxin-Hhn1p from Cyriopagopus hainanus (Chinese bird spider).